A 197-amino-acid chain; its full sequence is ATP-dependent Clp protease proteolytic subunit (197 aa).

The active-site Nucleophile is S98. The active site involves H123.

It belongs to the peptidase S14 family. As to quaternary structure, fourteen ClpP subunits assemble into 2 heptameric rings which stack back to back to give a disk-like structure with a central cavity, resembling the structure of eukaryotic proteasomes.

The protein localises to the cytoplasm. It catalyses the reaction Hydrolysis of proteins to small peptides in the presence of ATP and magnesium. alpha-casein is the usual test substrate. In the absence of ATP, only oligopeptides shorter than five residues are hydrolyzed (such as succinyl-Leu-Tyr-|-NHMec, and Leu-Tyr-Leu-|-Tyr-Trp, in which cleavage of the -Tyr-|-Leu- and -Tyr-|-Trp bonds also occurs).. Functionally, cleaves peptides in various proteins in a process that requires ATP hydrolysis. Has a chymotrypsin-like activity. Plays a major role in the degradation of misfolded proteins. This Enterococcus faecalis (strain ATCC 700802 / V583) protein is ATP-dependent Clp protease proteolytic subunit.